A 103-amino-acid polypeptide reads, in one-letter code: Large ribosomal subunit protein uL24 (103 aa).

It belongs to the universal ribosomal protein uL24 family. Part of the 50S ribosomal subunit.

One of two assembly initiator proteins, it binds directly to the 5'-end of the 23S rRNA, where it nucleates assembly of the 50S subunit. In terms of biological role, one of the proteins that surrounds the polypeptide exit tunnel on the outside of the subunit. The sequence is that of Large ribosomal subunit protein uL24 from Synechococcus sp. (strain CC9311).